A 665-amino-acid chain; its full sequence is Transketolase (665 aa).

His26 is a substrate binding site. Residues His66 and 114–116 (GPL) each bind thiamine diphosphate. A disordered region spans residues 94-114 (NSKTPGHPETGETPGVETTTG). Over residues 97–114 (TPGHPETGETPGVETTTG) the composition is skewed to low complexity. Asp155 contacts Mg(2+). The thiamine diphosphate site is built by Gly156 and Asn185. Mg(2+) contacts are provided by Asn185 and Ile187. 3 residues coordinate substrate: His261, Arg358, and Ser385. Thiamine diphosphate is bound at residue His261. Glu411 acts as the Proton donor in catalysis. Phe437 is a binding site for thiamine diphosphate. Substrate-binding residues include His461, Asp469, and Arg520.

It belongs to the transketolase family. In terms of assembly, homodimer. It depends on Mg(2+) as a cofactor. Ca(2+) is required as a cofactor. Requires Mn(2+) as cofactor. The cofactor is Co(2+). Thiamine diphosphate serves as cofactor.

It catalyses the reaction D-sedoheptulose 7-phosphate + D-glyceraldehyde 3-phosphate = aldehydo-D-ribose 5-phosphate + D-xylulose 5-phosphate. Functionally, catalyzes the transfer of a two-carbon ketol group from a ketose donor to an aldose acceptor, via a covalent intermediate with the cofactor thiamine pyrophosphate. This is Transketolase (tkt) from Buchnera aphidicola subsp. Acyrthosiphon pisum (strain APS) (Acyrthosiphon pisum symbiotic bacterium).